Consider the following 69-residue polypeptide: MIYKIFYQKDFDQVPVRENTDSLYVEAESEADVRKKLSEKNYNLEFITPISGEFLAYEQQKEHFTVEKL.

It belongs to the RNA polymerase subunit epsilon family. As to quaternary structure, RNAP is composed of a core of 2 alpha, a beta and a beta' subunit. The core is associated with a delta subunit, and at least one of epsilon or omega. When a sigma factor is associated with the core the holoenzyme is formed, which can initiate transcription.

The enzyme catalyses RNA(n) + a ribonucleoside 5'-triphosphate = RNA(n+1) + diphosphate. In terms of biological role, a non-essential component of RNA polymerase (RNAP). In Halalkalibacterium halodurans (strain ATCC BAA-125 / DSM 18197 / FERM 7344 / JCM 9153 / C-125) (Bacillus halodurans), this protein is DNA-directed RNA polymerase subunit epsilon.